Here is a 483-residue protein sequence, read N- to C-terminus: MAEFTPITIAYGDGIGPEIMEAVLYILRKAEARIRLETIEVGEKLYVKHYSSGISEQSWESIERTGVILKAPITTPQGGGYKSLNVTIRKTLQLFANIRPSVSFYPFTKTLHPNLNLTIIRENEEDLYAGIEYRQTHNMYESVKLISRTGCEKIIRYAFEYAVKNNRKKVTCLSKDNIMKFSDGIFHKVFNEIAKEYPQINNEHYIIDIGTARLATKPEIFDVIVTSNLYGDIISDVAAEISGSVGLAGSANIGEHYAMFEAVHGSAPDIAGQDIANPSGLLNAAIMMLVHIGQGDIATLIENAWKKTIEDGMHTADIYNKDHSTKKVGTKEFAEEVVKRLGQKPEKLAKADYPLVTKKQESNTTYKINTKEVKKLVGTDIFVGMNVASAHDIADKVNKLDIGNFELKTISSKGLKLWPRDTRFETISDHWCCRFMAKDGVELKHLDITKLLETLSKANIDFIKVENLFEFDGAAGYSLAQGE.

Thr-74 provides a ligand contact to NADP(+). The D-threo-isocitrate site is built by Ser-83, Asn-85, Arg-89, Arg-99, and Arg-121. Asp-232 is a Mg(2+) binding site. Residues 264–270 and Asn-277 each bind NADP(+); that span reads HGSAPDI.

It belongs to the isocitrate and isopropylmalate dehydrogenases family. As to quaternary structure, homodimer. Mg(2+) serves as cofactor. The cofactor is Mn(2+).

The catalysed reaction is D-threo-isocitrate + NADP(+) = 2-oxoglutarate + CO2 + NADPH. Its function is as follows. Catalyzes the oxidative decarboxylation of isocitrate to 2-oxoglutarate and carbon dioxide with the concomitant reduction of NADP(+). The protein is Isocitrate dehydrogenase [NADP] (icd) of Rickettsia bellii (strain RML369-C).